The chain runs to 193 residues: Holliday junction branch migration complex subunit RuvA (193 aa).

The interval 1-64 (MIGRIAGILL…EDAHLLYGFL (64 aa)) is domain I. The tract at residues 65–139 (TPQERTTFRE…GKLGADLGAL (75 aa)) is domain II. Positions 139–143 (LAGAA) are flexible linker. The interval 144 to 193 (SASDHATDILNALLALGYSEKEGLAAIKNVPAGTGVSEGIKLALKALSKA) is domain III.

The protein belongs to the RuvA family. In terms of assembly, homotetramer. Forms an RuvA(8)-RuvB(12)-Holliday junction (HJ) complex. HJ DNA is sandwiched between 2 RuvA tetramers; dsDNA enters through RuvA and exits via RuvB. An RuvB hexamer assembles on each DNA strand where it exits the tetramer. Each RuvB hexamer is contacted by two RuvA subunits (via domain III) on 2 adjacent RuvB subunits; this complex drives branch migration. In the full resolvosome a probable DNA-RuvA(4)-RuvB(12)-RuvC(2) complex forms which resolves the HJ.

The protein localises to the cytoplasm. The RuvA-RuvB-RuvC complex processes Holliday junction (HJ) DNA during genetic recombination and DNA repair, while the RuvA-RuvB complex plays an important role in the rescue of blocked DNA replication forks via replication fork reversal (RFR). RuvA specifically binds to HJ cruciform DNA, conferring on it an open structure. The RuvB hexamer acts as an ATP-dependent pump, pulling dsDNA into and through the RuvAB complex. HJ branch migration allows RuvC to scan DNA until it finds its consensus sequence, where it cleaves and resolves the cruciform DNA. The chain is Holliday junction branch migration complex subunit RuvA from Burkholderia cenocepacia (strain HI2424).